Consider the following 347-residue polypeptide: FK506-binding protein-like (347 aa).

A disordered region spans residues 1-24 (METSPISPMNEKNTAQPQQREENA). Residue threonine 3 is modified to Phosphothreonine. TPR repeat units lie at residues 208-241 (AKEE…LLTL), 250-283 (TTLY…EPGH), and 284-317 (LKAL…DPKN).

As to quaternary structure, forms a ternary complex with CDKN1A/p21 and HSP90AB1/Hsp90.

Its function is as follows. May be involved in response to X-ray. Regulates p21 protein stability by binding to Hsp90 and p21. This is FK506-binding protein-like (Fkbpl) from Mus musculus (Mouse).